The following is a 314-amino-acid chain: Deoxyribonuclease-1-like 1 (314 aa).

The first 37 residues, 1–37 (MPFGQPGFLWRVPDAHIAMRGLVMAPLLILLVGGTEA), serve as a signal peptide directing secretion. Asn102 carries an N-linked (GlcNAc...) asparagine glycan. The active site involves Glu113. An N-linked (GlcNAc...) asparagine glycan is attached at Asn133. The active site involves His164. A disulfide bond links Cys203 and Cys240. Asn239 carries N-linked (GlcNAc...) asparagine glycosylation.

This sequence belongs to the DNase I family. Highly expressed in heart and skeletal muscles. Low expression in brain and thymus. Intermediated expression in other tissues.

Its subcellular location is the endoplasmic reticulum. In Mus musculus (Mouse), this protein is Deoxyribonuclease-1-like 1 (Dnase1l1).